Reading from the N-terminus, the 316-residue chain is Protoheme IX farnesyltransferase (316 aa).

The next 9 membrane-spanning stretches (helical) occupy residues 29–49, 54–74, 102–122, 123–143, 151–171, 179–199, 224–241, 245–267, and 283–303; these read IIPL…EGRV, LLIT…LNCI, LIFA…FVNV, LSGC…THWL, IVIG…AVTG, VLFA…ALMI, IWYY…LVYP, LGIL…AWQL, and FSIF…LPVT.

The protein belongs to the UbiA prenyltransferase family. Protoheme IX farnesyltransferase subfamily.

Its subcellular location is the cell inner membrane. The catalysed reaction is heme b + (2E,6E)-farnesyl diphosphate + H2O = Fe(II)-heme o + diphosphate. The protein operates within porphyrin-containing compound metabolism; heme O biosynthesis; heme O from protoheme: step 1/1. In terms of biological role, converts heme B (protoheme IX) to heme O by substitution of the vinyl group on carbon 2 of heme B porphyrin ring with a hydroxyethyl farnesyl side group. In Synechocystis sp. (strain ATCC 27184 / PCC 6803 / Kazusa), this protein is Protoheme IX farnesyltransferase.